The chain runs to 799 residues: Integrin beta-1 (799 aa).

A signal peptide spans 1–20; the sequence is MNLQLVFWIGLISLICSVFG. Over 21–729 the chain is Extracellular; the sequence is QTDKNRCLKA…ETPDCPTGPD (709 aa). One can recognise a PSI domain in the interval 26–76; that stretch reads RCLKANAKSCGECIQAGPNCGWCTNTTFLQEGMPTSARCDDLEALKKKGCH. Cystine bridges form between Cys27–Cys45, Cys35–Cys465, Cys38–Cys64, Cys48–Cys75, Cys207–Cys213, Cys261–Cys301, Cys401–Cys415, Cys435–Cys463, Cys467–Cys487, Cys478–Cys490, Cys492–Cys501, Cys503–Cys534, Cys517–Cys532, Cys526–Cys537, Cys539–Cys554, Cys556–Cys577, Cys561–Cys575, Cys569–Cys580, Cys582–Cys591, Cys593–Cys616, Cys600–Cys614, Cys608–Cys619, Cys621–Cys631, Cys634–Cys637, Cys641–Cys692, Cys647–Cys666, Cys650–Cys662, and Cys700–Cys724. 3 N-linked (GlcNAc...) asparagine glycosylation sites follow: Asn50, Asn94, and Asn97. The 239-residue stretch at 140-378 folds into the VWFA domain; sequence DYPIDLYYLM…QLIIDAYNSL (239 aa). Mg(2+)-binding residues include Ser152 and Ser154. Ca(2+) contacts are provided by Ser154, Asp157, Asp158, and Glu189. Residues 207 to 213 form a CX3CL1-binding region; the sequence is CTSEQNC. Asn212 carries an N-linked (GlcNAc...) asparagine glycan. Residues Asn244, Asp246, Pro248, and Glu249 each coordinate Ca(2+). Glu249 lines the Mg(2+) pocket. Asn269 carries an N-linked (GlcNAc...) asparagine glycan. The segment at 295 to 314 is CX3CL1-binding; the sequence is LPNDGQCHLENNVYTMSHYY. Ca(2+) is bound at residue Gly362. 3 N-linked (GlcNAc...) asparagine glycosylation sites follow: Asn363, Asn406, and Asn417. The tract at residues 383–466 is interaction with TMEM182; sequence ILENSKLPDG…VVLQFICKCN (84 aa). I-EGF domains follow at residues 467-502, 503-555, 556-592, and 593-632; these read CQSH…RHCE, CSTD…KFCE, CDNF…SACD, and CSLD…PTCE. N-linked (GlcNAc...) asparagine glycosylation is present at Asn482. The N-linked (GlcNAc...) asparagine glycan is linked to Asn521. An N-linked (GlcNAc...) asparagine glycan is attached at Asn585. Asn670 is a glycosylation site (N-linked (GlcNAc...) asparagine). The helical transmembrane segment at 730-752 threads the bilayer; sequence IIPIVAGVVAGIVLIGLALLLIW. Topologically, residues 753-799 are cytoplasmic; it reads KLLMIIHDRREFAKFEKEKMNAKWDTGENPIYKSAVTTVVNPKYEGK. The interval 763 to 768 is signal for sorting from recycling endosomes; interaction with ACAP1; sequence EFAKFE. Thr778 is subject to Phosphothreonine. A Phosphotyrosine modification is found at Tyr784. Ser786 bears the Phosphoserine mark. An interaction with ITGB1BP1 region spans residues 786 to 793; that stretch reads SAVTTVVN. Phosphothreonine is present on Thr790. Lys795 bears the N6-acetyllysine; alternate mark. Lys795 is covalently cross-linked (Glycyl lysine isopeptide (Lys-Gly) (interchain with G-Cter in SUMO1); alternate).

The protein belongs to the integrin beta chain family. Interacts with seprase FAP (seprase); the interaction occurs at the cell surface of invadopodia membrane in a collagen-dependent manner. Heterodimer of an alpha and a beta subunit. Beta-1 associates with either alpha-1, alpha-2, alpha-3, alpha-4, alpha-5, alpha-6, alpha-7, alpha-8, alpha-9, alpha-10, alpha-11 or alpha-V. ITGA6:ITGB1 is found in a complex with CD9; interaction takes place in oocytes and is involved in sperm-egg fusion. Binds LGALS3BP and NMRK2, when associated with alpha-7, but not with alpha-5. Interacts with FLNA, FLNB, FLNC and RANBP9. Interacts with KRT1 in the presence of RACK1 and SRC. Interacts with JAML; integrin alpha-4/beta-1 may regulate leukocyte to endothelial cells adhesion by controlling JAML homodimerization. Interacts with RAB21. Interacts (via the cytoplasmic region) with RAB25 (via the hypervariable C-terminal region). Interacts with MYO10. Interacts with ITGB1BP1 (via C-terminal region); the interaction is a prerequisite for focal adhesion disassembly. Interacts with TLN1; the interaction is prevented by competitive binding of ITGB1BP1. Interacts with ACAP1; required for ITGB1 recycling. Interacts with ASAP3. Interacts with FERMT2; the interaction is inhibited in presence of ITGB1BP1. Interacts with DAB2. Interacts with FGR and HCK. Interacts with alpha-7A and alpha-7B in adult skeletal muscle. Interacts with alpha-7B in cardiomyocytes of adult heart. Interacts with EMP2; the interaction may be direct or indirect and ITGB1 has a heterodimer form. ITGA5:ITGB1 interacts with CCN3. ITGA4:ITGB1 is found in a ternary complex with CX3CR1 and CX3CL1. ITGA5:ITGB1 interacts with FBN1. ITGA5:ITGB1 acts as a receptor for fibronectin FN1 and mediates R-G-D-dependent cell adhesion to FN1. ITGA5:ITGB1 interacts with IL1B. Interacts with MDK. ITGA4:ITGB1 interacts with MDK; this interaction mediates MDK-induced osteoblast cells migration through PXN phosphorylation. ITGA6:ITGB1 interacts with MDK; this interaction mediates MDK-induced neurite-outgrowth. ITGA5:ITGB1 interacts with ACE2. Interacts with TMEM182 and LAMB1. Interacts with tensin TNS3; TNS3 also interacts with PEAK1, thus acting as an adapter molecule to bridge the association of PEAK1 with ITGB1. Interacts with tensin TNS4; the interaction displaces tensin TNS3 from the ITGB1 cytoplasmic tail and promotes ITGB1 stability. Integrin ITGA9:ITGB1 interacts with SPP1/OPN (via N-terminus). Integrin ITGA9:ITGB1 interacts with TNC/TNFN3 (via the 3rd Fibronectin type-III domain). Integrins ITGA4:ITGB1 and ITGA9:ITGB1 interact with SVEP1 (via Sushi domain 21); thereby inhibit Ca(2+) intracellular signaling and as a result repress vasocontraction. ITGA4:ITGB1 and ITGA5:ITGB1 interacts with SELP. ITGA5:ITGB1 interacts with IGFBP1. ITGA4:ITGB1 interacts with BCAM. Interacts with ADGRG6.

It is found in the cell membrane. Its subcellular location is the cell projection. The protein resides in the invadopodium membrane. It localises to the ruffle membrane. The protein localises to the recycling endosome. It is found in the melanosome. Its subcellular location is the lamellipodium. The protein resides in the ruffle. It localises to the cell junction. The protein localises to the focal adhesion. Its function is as follows. Integrins alpha-1/beta-1, alpha-2/beta-1, alpha-10/beta-1 and alpha-11/beta-1 are receptors for collagen. Integrins alpha-1/beta-1 and alpha-2/beta-2 recognize the proline-hydroxylated sequence G-F-P-G-E-R in collagen. Integrins alpha-2/beta-1, alpha-3/beta-1, alpha-4/beta-1, alpha-5/beta-1, alpha-8/beta-1, alpha-10/beta-1, alpha-11/beta-1 and alpha-V/beta-1 are receptors for fibronectin. Alpha-4/beta-1 recognizes one or more domains within the alternatively spliced CS-1 and CS-5 regions of fibronectin. Integrin alpha-5/beta-1 is a receptor for fibrinogen. Integrin alpha-1/beta-1, alpha-2/beta-1, alpha-6/beta-1 and alpha-7/beta-1 are receptors for lamimin. Integrin alpha-6/beta-1 (ITGA6:ITGB1) is present in oocytes and is involved in sperm-egg fusion. Integrin alpha-4/beta-1 is a receptor for VCAM1 and recognizes the sequence Q-I-D-S in VCAM1. Integrin alpha-9/beta-1 is a receptor for VCAM1, cytotactin and osteopontin. It recognizes the sequence A-E-I-D-G-I-E-L in cytotactin. Integrin alpha-3/beta-1 is a receptor for epiligrin, thrombospondin and CSPG4. Integrin alpha-3/beta-1 provides a docking site for FAP (seprase) at invadopodia plasma membranes in a collagen-dependent manner and hence may participate in the adhesion, formation of invadopodia and matrix degradation processes, promoting cell invasion. Alpha-3/beta-1 may mediate with LGALS3 the stimulation by CSPG4 of endothelial cells migration. Integrin alpha-V/beta-1 is a receptor for vitronectin. Beta-1 integrins recognize the sequence R-G-D in a wide array of ligands. When associated with alpha-7/beta-1 integrin, regulates cell adhesion and laminin matrix deposition. Involved in promoting endothelial cell motility and angiogenesis. Involved in osteoblast compaction through the fibronectin fibrillogenesis cell-mediated matrix assembly process and the formation of mineralized bone nodules. May be involved in up-regulation of the activity of kinases such as PKC via binding to KRT1. Together with KRT1 and RACK1, serves as a platform for SRC activation or inactivation. Plays a mechanistic adhesive role during telophase, required for the successful completion of cytokinesis. ITGA4:ITGB1 binds to fractalkine (CX3CL1) and may act as its coreceptor in CX3CR1-dependent fractalkine signaling. ITGA4:ITGB1 and ITGA5:ITGB1 bind to PLA2G2A via a site (site 2) which is distinct from the classical ligand-binding site (site 1) and this induces integrin conformational changes and enhanced ligand binding to site 1. ITGA5:ITGB1 acts as a receptor for fibrillin-1 (FBN1) and mediates R-G-D-dependent cell adhesion to FBN1. ITGA5:ITGB1 is a receptor for IL1B and binding is essential for IL1B signaling. ITGA5:ITGB3 is a receptor for soluble CD40LG and is required for CD40/CD40LG signaling. Plays an important role in myoblast differentiation and fusion during skeletal myogenesis. ITGA9:ITGB1 may play a crucial role in SVEP1/polydom-mediated myoblast cell adhesion. Integrins ITGA9:ITGB1 and ITGA4:ITGB1 repress PRKCA-mediated L-type voltage-gated channel Ca(2+) influx and ROCK-mediated calcium sensitivity in vascular smooth muscle cells via their interaction with SVEP1, thereby inhibit vasocontraction. The chain is Integrin beta-1 (Itgb1) from Rattus norvegicus (Rat).